The chain runs to 734 residues: MDIELFLSNYNIANGTSSTTANNSKFQPKIKVKLVVESGSSTYEKSLESTNDQLKPLIIKLNNKIKKYEESLNKKNFVTPNKQSSSSMNLLQKSSTVNLSSPSLSQIGLTHHASLKNLQITTSPDIQQPPSVPSNPIVFGISLDTLIAKEKSMELRIPTFVSNILNTLFLHSLGVEGLFRISGSQMEIQNRRGIVNLGDYSTSRDDNPHVLTVLLKQFLRDLPEPICTNALYDLFLAASDQINFQQCKENGFEVLKKLINSNLPVNNRNLLQHLIHFLRFVAMNQTVNLMGPSNLSRVFGPNLFWKKETGPLDIQILQSTSEKVNFITEQMILHYDTLFEEPLQTTSPAVLSNTPINSNPASIPTFNFGGKKLVIHSKLLGHNKSIQWMTLCGSSNSNGNSELSGSRVWSLDSHGMARIWDSQNQQFIKEVEVVDQSKGGGGAVYQMISTTVNNTVWTATSQKLAIWDIDGGLIGEIPGESYSLCESQNKEIWVGGPQVLNIYSLDGIPSIAPSNCTSDDNNSNGAGGGELLKPIGTNLFMKGIIILAMCKVGQNRIWGCSSEKTLYVWDTKTKETIHQCEIQEKRPKRMACIEIDDTEYIWIGGDEGSIQIFNSKTFKLEHKILNQGWDKIFHIASINREIWIGFWDTTVRVFPGDPKNKEILIDYKGYHSDVVSSIIEVPNLKGGDPFVWFGSYDKSISIVSIKEDTAKSWNFTNIKKNFTRPIRQGFSSRG.

The 199-residue stretch at 141 to 339 (ISLDTLIAKE…QMILHYDTLF (199 aa)) folds into the Rho-GAP domain. WD repeat units lie at residues 381-430 (GHNK…FIKE), 539-579 (LFMK…TIHQ), and 585-623 (KRPK…LEHK).

Its subcellular location is the cytoplasm. Rho GTPase-activating protein involved in the signal transduction pathway. The protein is Rho GTPase-activating protein gacL (gacL) of Dictyostelium discoideum (Social amoeba).